Reading from the N-terminus, the 949-residue chain is Glycine dehydrogenase (decarboxylating) (949 aa).

Residue Lys700 is modified to N6-(pyridoxal phosphate)lysine.

It belongs to the GcvP family. The glycine cleavage system is composed of four proteins: P, T, L and H. It depends on pyridoxal 5'-phosphate as a cofactor.

It catalyses the reaction N(6)-[(R)-lipoyl]-L-lysyl-[glycine-cleavage complex H protein] + glycine + H(+) = N(6)-[(R)-S(8)-aminomethyldihydrolipoyl]-L-lysyl-[glycine-cleavage complex H protein] + CO2. The glycine cleavage system catalyzes the degradation of glycine. The P protein binds the alpha-amino group of glycine through its pyridoxal phosphate cofactor; CO(2) is released and the remaining methylamine moiety is then transferred to the lipoamide cofactor of the H protein. This chain is Glycine dehydrogenase (decarboxylating), found in Christiangramia forsetii (strain DSM 17595 / CGMCC 1.15422 / KT0803) (Gramella forsetii).